We begin with the raw amino-acid sequence, 282 residues long: Bis(5'-nucleosyl)-tetraphosphatase, symmetrical (282 aa).

It belongs to the Ap4A hydrolase family.

It carries out the reaction P(1),P(4)-bis(5'-adenosyl) tetraphosphate + H2O = 2 ADP + 2 H(+). Hydrolyzes diadenosine 5',5'''-P1,P4-tetraphosphate to yield ADP. The chain is Bis(5'-nucleosyl)-tetraphosphatase, symmetrical from Burkholderia pseudomallei (strain 1106a).